Consider the following 330-residue polypeptide: Ketol-acid reductoisomerase (NADP(+)) (330 aa).

In terms of domain architecture, KARI N-terminal Rossmann spans 1–181; the sequence is MKVFYDSDFK…GLSRAGVIQT (181 aa). NADP(+) contacts are provided by residues 24 to 27, Arg-47, Ser-52, and 82 to 85; these read YGSQ and DELQ. Residue His-107 is part of the active site. An NADP(+)-binding site is contributed by Gly-133. The region spanning 182–327 is the KARI C-terminal knotted domain; sequence TFKEETETDL…AKLRKMCGLE (146 aa). Mg(2+)-binding residues include Asp-190, Glu-194, Glu-226, and Glu-230. Substrate is bound at residue Ser-251.

It belongs to the ketol-acid reductoisomerase family. Mg(2+) is required as a cofactor.

The catalysed reaction is (2R)-2,3-dihydroxy-3-methylbutanoate + NADP(+) = (2S)-2-acetolactate + NADPH + H(+). It catalyses the reaction (2R,3R)-2,3-dihydroxy-3-methylpentanoate + NADP(+) = (S)-2-ethyl-2-hydroxy-3-oxobutanoate + NADPH + H(+). It functions in the pathway amino-acid biosynthesis; L-isoleucine biosynthesis; L-isoleucine from 2-oxobutanoate: step 2/4. The protein operates within amino-acid biosynthesis; L-valine biosynthesis; L-valine from pyruvate: step 2/4. Involved in the biosynthesis of branched-chain amino acids (BCAA). Catalyzes an alkyl-migration followed by a ketol-acid reduction of (S)-2-acetolactate (S2AL) to yield (R)-2,3-dihydroxy-isovalerate. In the isomerase reaction, S2AL is rearranged via a Mg-dependent methyl migration to produce 3-hydroxy-3-methyl-2-ketobutyrate (HMKB). In the reductase reaction, this 2-ketoacid undergoes a metal-dependent reduction by NADPH to yield (R)-2,3-dihydroxy-isovalerate. The protein is Ketol-acid reductoisomerase (NADP(+)) of Methanococcus maripaludis (strain C7 / ATCC BAA-1331).